We begin with the raw amino-acid sequence, 340 residues long: Uroporphyrinogen decarboxylase (340 aa).

Residues 21–25 (RQAGR), Asp71, Tyr147, Ser202, and His316 each bind substrate.

Belongs to the uroporphyrinogen decarboxylase family. Homodimer.

The protein localises to the cytoplasm. It carries out the reaction uroporphyrinogen III + 4 H(+) = coproporphyrinogen III + 4 CO2. Its pathway is porphyrin-containing compound metabolism; protoporphyrin-IX biosynthesis; coproporphyrinogen-III from 5-aminolevulinate: step 4/4. Catalyzes the decarboxylation of four acetate groups of uroporphyrinogen-III to yield coproporphyrinogen-III. The protein is Uroporphyrinogen decarboxylase of Nitratiruptor sp. (strain SB155-2).